Reading from the N-terminus, the 98-residue chain is Large ribosomal subunit protein eL14 (98 aa).

It belongs to the eukaryotic ribosomal protein eL14 family.

In Thermofilum pendens (strain DSM 2475 / Hrk 5), this protein is Large ribosomal subunit protein eL14.